The chain runs to 340 residues: MKALVKREASKGIWLEQVPVPTPGPNEVLIKLEKTAICGTDLHIYLWDEWSQRTITPGLTIGHEFVGRVAELGSAVTGYQVGQRVSAEGHIVCGHCRNCRGGRPHLCPNTVGIGVNVNGAFAEYMVMPASNLWPIPDQIPSELAAFFDPYGNAAHCALEFDVIGEDVLITGAGPIGIIAAGICKHIGARNVVVTDVNDFRLKLAADLGATRVVNVSKTSLKDVMADLHMEGFDVGLEMSGNPRAFNDMLDCMYHGGKIAMLGIMPRGAGCDWDKIIFKGLTVQGIYGRKMYETWYKMTQLVLSGFPLQKVLTHQLSIDEFQKGFDLMEEGKAGKVVLSWN.

Position 38 (cysteine 38) interacts with Zn(2+). Active-site charge relay system residues include threonine 40 and histidine 43. Zn(2+) is bound by residues histidine 63, glutamate 64, cysteine 93, cysteine 96, cysteine 99, and cysteine 107. NAD(+)-binding positions include isoleucine 175, aspartate 195, arginine 200, 261–263 (LGI), and 285–286 (IY).

The protein belongs to the zinc-containing alcohol dehydrogenase family. In terms of assembly, homotetramer. Zn(2+) is required as a cofactor.

The protein localises to the cytoplasm. The catalysed reaction is L-threonine + NAD(+) = (2S)-2-amino-3-oxobutanoate + NADH + H(+). It participates in amino-acid degradation; L-threonine degradation via oxydo-reductase pathway; glycine from L-threonine: step 1/2. In terms of biological role, catalyzes the NAD(+)-dependent oxidation of L-threonine to 2-amino-3-ketobutyrate. The polypeptide is L-threonine 3-dehydrogenase (Xanthomonas campestris pv. campestris (strain ATCC 33913 / DSM 3586 / NCPPB 528 / LMG 568 / P 25)).